The following is a 261-amino-acid chain: Thiamine thiazole synthase (261 aa).

Residues Ala-33, 52-53 (ER), Gly-60, Val-124, and 152-154 (HVD) contribute to the NAD(+) site. 2 residues coordinate Fe cation: Asp-154 and His-169. Met-219 lines the NAD(+) pocket. Arg-229 is a glycine binding site.

This sequence belongs to the THI4 family. Homooctamer; tetramer of dimers. Fe(2+) serves as cofactor.

It catalyses the reaction hydrogen sulfide + glycine + NAD(+) = ADP-5-ethyl-4-methylthiazole-2-carboxylate + nicotinamide + 3 H2O + H(+). It participates in cofactor biosynthesis; thiamine diphosphate biosynthesis. Functionally, involved in the biosynthesis of the thiazole moiety of thiamine. Catalyzes the conversion of NAD and glycine to adenosine diphosphate 5-(2-hydroxyethyl)-4-methylthiazole-2-carboxylate (ADT), an adenylated thiazole intermediate, using free sulfide as a source of sulfur. This chain is Thiamine thiazole synthase, found in Pyrobaculum islandicum (strain DSM 4184 / JCM 9189 / GEO3).